A 759-amino-acid polypeptide reads, in one-letter code: MQNWETTATTNYEQHNAWYNSMFAANIKQEPGHHLDGNSVASSPRQSPIPSTNHLEQFLKQQQQQQHQQQPMDTLCAMTPSPSQNDQNSLQHYDASLQQQLLQQQQYQQHFQAAQQQHHHHHHLMGGFNPLTPPGLPNPMQHFYGGNLRPSPQPTPTSASTVAPVAVATGSSEKLQALTPPMDVTPPKSPAKSSQSNIEPEKEHDQMSNSSEDMKYMAESEDDDTNIRMPIYNSHGKMKNYKCKTCGVVAITKVDFWAHTRTHMKPDKILQCPKCPFVTEFKHHLEYHIRKHKNQKPFQCDKCSYTCVNKSMLNSHRKSHSSVYQYRCADCDYATKYCHSFKLHLRKYGHKPGMVLDEDGTPNPSLVIDVYGTRRGPKSKNGGPIASGGSGSGSRKPNVAAVAPQQQQSQPAQPATSQLSAALQGFPLVQSNSAPPAASPVLPLPASPAKSVASVEQTPSLPSPANLLPPLASLLQQNRNMAFFPYWNLNLQMLAAQQQAAVLAQLSPRMREQLQQQNQQQSDNEEEEQDDEYERKSVDSAMDLSQGTPVKEDDQHQQQQQPQQPLAMNLKVEEEATPLMSSSNASRRKGRVLKLDTLLQLRSEAMTSPEQLKVPSTPMPTASSPIAGRKPMPEDHCSGTSSADESMETAHVPQANTSASSTASSSGNSSNASSNGNSSSNSSSNGTSSAAAAPASGTPAAAGAIYECKYCDIFFKDAVLYTIHMGYHSCDDVFKCNMCGEKCDGPVGLFVHMARNAHS.

Disordered regions lie at residues 30 to 51 (EPGH…PIPS) and 171 to 215 (SSEK…EDMK). Positions 39-51 (SVASSPRQSPIPS) are enriched in polar residues. The residue at position 179 (threonine 179) is a Phosphothreonine. Serine 189, serine 208, serine 210, and serine 211 each carry phosphoserine. Basic and acidic residues predominate over residues 199-215 (EPEKEHDQMSNSSEDMK). 4 C2H2-type zinc fingers span residues 241–263 (YKCK…TRTH), 270–292 (LQCP…IRKH), 298–320 (FQCD…RKSH), and 326–350 (YRCA…KYGH). Disordered regions lie at residues 366–419 (LVID…TSQL), 513–565 (QLQQ…PQQP), and 606–696 (MTSP…APAS). Low complexity-rich tracts occupy residues 399–419 (VAAV…TSQL) and 513–522 (QLQQQNQQQS). A compositionally biased stretch (acidic residues) spans 523 to 532 (DNEEEEQDDE). Serine 537 and serine 540 each carry phosphoserine. The segment covering 655 to 696 (ANTSASSTASSSGNSSNASSNGNSSSNSSSNGTSSAAAAPAS) has biased composition (low complexity). C2H2-type zinc fingers lie at residues 706 to 728 (YECK…MGYH) and 734 to 758 (FKCN…RNAH).

It belongs to the hunchback C2H2-type zinc-finger protein family.

It localises to the nucleus. Gap class segmentation protein that controls development of head structures. This chain is Protein hunchback, found in Drosophila yakuba (Fruit fly).